The primary structure comprises 251 residues: Triosephosphate isomerase (251 aa).

Position 9 to 11 (9 to 11 (NWK)) interacts with substrate. Histidine 94 acts as the Electrophile in catalysis. Glutamate 166 (proton acceptor) is an active-site residue. Residues glycine 172, serine 211, and 232-233 (GG) each bind substrate.

Belongs to the triosephosphate isomerase family. As to quaternary structure, homodimer.

It is found in the cytoplasm. The catalysed reaction is D-glyceraldehyde 3-phosphate = dihydroxyacetone phosphate. Its pathway is carbohydrate biosynthesis; gluconeogenesis. It participates in carbohydrate degradation; glycolysis; D-glyceraldehyde 3-phosphate from glycerone phosphate: step 1/1. Involved in the gluconeogenesis. Catalyzes stereospecifically the conversion of dihydroxyacetone phosphate (DHAP) to D-glyceraldehyde-3-phosphate (G3P). This Xanthomonas axonopodis pv. citri (strain 306) protein is Triosephosphate isomerase.